We begin with the raw amino-acid sequence, 413 residues long: Palmitoyltransferase ZDHHC6 (413 aa).

Topologically, residues 1–24 are cytoplasmic; it reads MGTFCSVVKFENLQELKRLCHWGP. A helical transmembrane segment spans residues 25–45; the sequence is IIALGVIAICSAMAMIDSVLW. The Lumenal segment spans residues 46-57; sequence YWPLHTTGGSVN. The chain crosses the membrane as a helical span at residues 58-78; that stretch reads FIMLINWTVMILYNYFNAMFV. The Cytoplasmic portion of the chain corresponds to 79–143; it reads GPGFVPLGWK…NCCGYQNHAS (65 aa). The region spanning 99–149 is the DHHC domain; sequence QYCKVCQAYKAPRSHHCRKCNRCVMKMDHHCPWINNCCGYQNHASFTLFLL. C129 acts as the S-palmitoyl cysteine intermediate in catalysis. Residues 144–164 form a helical membrane-spanning segment; sequence FTLFLLLAPLGCIHAAFIFVM. Topologically, residues 165–194 are lumenal; sequence TMYTQLYNRLSFGWNTVKIDMSAARRDPLP. A helical transmembrane segment spans residues 195–215; sequence IIPFGLAAFAATLFALGLALG. Residues 216–413 are Cytoplasmic-facing; it reads TTIAVGMLFF…QAPEGEKKNR (198 aa). The SH3 domain maps to 313 to 398; that stretch reads VRSVRYKVIE…PRNCVEKCPC (86 aa). 3 S-palmitoyl cysteine lipidation sites follow: C328, C329, and C343. The Di-lysine motif signature appears at 410–413; that stretch reads KKNR.

This sequence belongs to the DHHC palmitoyltransferase family. As to quaternary structure, homooligomerizes. Interacts with SELENOK. Palmitoylated at 3 different sites by ZDHHC16. The combination of the different palmitoylation events strongly affects the quaternary assembly of ZDHHC6, its localization, stability and function. Palmitoylation at Cys-328 accelerates the turnover of ZDHHC6. Depalmitoylated by LYPLA2.

The protein localises to the endoplasmic reticulum membrane. It carries out the reaction L-cysteinyl-[protein] + hexadecanoyl-CoA = S-hexadecanoyl-L-cysteinyl-[protein] + CoA. The enzyme catalyses L-cysteinyl-[protein] + octadecanoyl-CoA = S-octadecanoyl-L-cysteinyl-[protein] + CoA. In terms of biological role, endoplasmic reticulum palmitoyl acyltransferase that mediates palmitoylation of proteins such as AMFR, CALX, ITPR1 and TFRC. Palmitoylates calnexin (CALX), which is required for its association with the ribosome-translocon complex and efficient folding of glycosylated proteins. Mediates palmitoylation of AMFR, promoting AMFR distribution to the peripheral endoplasmic reticulum. Together with SELENOK, palmitoylates ITPR1 in immune cells, leading to regulate ITPR1 stability and function. Stearoyltransferase that mediates stearoylation of TFRC to inhibit TFRC-mediated activation of the JNK pathway and mitochondrial fragmentation. In Bos taurus (Bovine), this protein is Palmitoyltransferase ZDHHC6.